The following is a 195-amino-acid chain: Interferon omega-1 (195 aa).

The signal sequence occupies residues 1-23; the sequence is MAFVLSLLMALVLVSYGPGGSLG. 2 disulfides stabilise this stretch: Cys24–Cys122 and Cys52–Cys162.

Belongs to the alpha/beta interferon family.

It localises to the secreted. This chain is Interferon omega-1 (IFNW1), found in Bos taurus (Bovine).